The following is a 33-amino-acid chain: Brevinin-2Ef (33 aa).

A disulfide bridge links C27 with C33.

In terms of tissue distribution, expressed by the skin glands.

The protein resides in the secreted. Its function is as follows. Shows antibacterial activity against representative Gram-negative and Gram-positive bacterial species, and hemolytic activity. This chain is Brevinin-2Ef, found in Pelophylax ridibundus (Marsh frog).